The following is a 438-amino-acid chain: Gamma-glutamyl phosphate reductase (438 aa).

Positions 1–21 are disordered; the sequence is MTAQTSSDVTDQKTDLTRESE. The span at 10–21 shows a compositional bias: basic and acidic residues; the sequence is TDQKTDLTRESE.

The protein belongs to the gamma-glutamyl phosphate reductase family.

The protein localises to the cytoplasm. It carries out the reaction L-glutamate 5-semialdehyde + phosphate + NADP(+) = L-glutamyl 5-phosphate + NADPH + H(+). It functions in the pathway amino-acid biosynthesis; L-proline biosynthesis; L-glutamate 5-semialdehyde from L-glutamate: step 2/2. Functionally, catalyzes the NADPH-dependent reduction of L-glutamate 5-phosphate into L-glutamate 5-semialdehyde and phosphate. The product spontaneously undergoes cyclization to form 1-pyrroline-5-carboxylate. This is Gamma-glutamyl phosphate reductase from Corynebacterium efficiens (strain DSM 44549 / YS-314 / AJ 12310 / JCM 11189 / NBRC 100395).